The chain runs to 258 residues: 5'-nucleotidase SurE (258 aa).

Residues Asp-9, Asp-10, Ser-40, and Asn-95 each coordinate a divalent metal cation.

Belongs to the SurE nucleotidase family. A divalent metal cation is required as a cofactor.

It localises to the cytoplasm. It catalyses the reaction a ribonucleoside 5'-phosphate + H2O = a ribonucleoside + phosphate. Nucleotidase that shows phosphatase activity on nucleoside 5'-monophosphates. The polypeptide is 5'-nucleotidase SurE (Nitratiruptor sp. (strain SB155-2)).